We begin with the raw amino-acid sequence, 435 residues long: tRNA-2-methylthio-N(6)-dimethylallyladenosine synthase (435 aa).

The MTTase N-terminal domain maps to 2–117; the sequence is KKASIITYGC…IPQAIEKIEN (116 aa). [4Fe-4S] cluster is bound by residues cysteine 11, cysteine 47, cysteine 80, cysteine 154, cysteine 158, and cysteine 161. Residues 140-370 form the Radical SAM core domain; the sequence is FGSDQTASIS…MEVQNKCSFY (231 aa). The TRAM domain occupies 373–435; that stretch reads SKYKGRIVKV…KTWTLYGEIV (63 aa).

Belongs to the methylthiotransferase family. MiaB subfamily. As to quaternary structure, monomer. [4Fe-4S] cluster is required as a cofactor.

It is found in the cytoplasm. The catalysed reaction is N(6)-dimethylallyladenosine(37) in tRNA + (sulfur carrier)-SH + AH2 + 2 S-adenosyl-L-methionine = 2-methylsulfanyl-N(6)-dimethylallyladenosine(37) in tRNA + (sulfur carrier)-H + 5'-deoxyadenosine + L-methionine + A + S-adenosyl-L-homocysteine + 2 H(+). Catalyzes the methylthiolation of N6-(dimethylallyl)adenosine (i(6)A), leading to the formation of 2-methylthio-N6-(dimethylallyl)adenosine (ms(2)i(6)A) at position 37 in tRNAs that read codons beginning with uridine. The protein is tRNA-2-methylthio-N(6)-dimethylallyladenosine synthase of Fusobacterium nucleatum subsp. nucleatum (strain ATCC 25586 / DSM 15643 / BCRC 10681 / CIP 101130 / JCM 8532 / KCTC 2640 / LMG 13131 / VPI 4355).